Reading from the N-terminus, the 204-residue chain is Ricin B-like lectin R40G3 (204 aa).

Residues 54-200 (TVKVYCRANP…CEGDNQRWKI (147 aa)) form the Ricin B-type lectin domain.

As to expression, expressed in shoots and lamina.

In terms of biological role, lectin which binds carbohydrates in vitro. Interacts through its lectin domain with glycan structures containing specific motifs. This is Ricin B-like lectin R40G3 from Oryza sativa subsp. japonica (Rice).